The following is a 422-amino-acid chain: MGIPWVEKYRPKAFSEIVNQEEAKTLLASWICARFRAPKEFCARWAKKREKEVAEAKAVLLAGPPGIGKTTVVHALAREIRYELIELNASDIRTGERIKLVVGRGLKESSLFGYEGKLVLFDEVDGLHVKEDEGGLEAIVEIVETAKVPIVMTANNPYDPKFRPLRDISLVVNLKRLSEEEVVEVLRRICTAEGAKCEEEALRSIAKSSLGDLRAAINDLQMYLSGGRKTLTVDDIKRVGERNPQLSMFEVLDRVYRARWFDEARAVSFNPSFDWEQYFLWALETVPVVYKDVETAAAAYDRLSKADMFLGRIKRMQEWELLPYALELALGGVSQVKNKPRLPPFIKYGFPQRLLLLAKSREARRRREALVEYLAQNLHISRSLARSDIIYVLSALARRDPKVVERLSRALGINAIDVKNLL.

ATP is bound at residue 63–70 (GPPGIGKT).

This sequence belongs to the activator 1 small subunits family. RfcL subfamily. Heteromultimer composed of small subunits (RfcS) and large subunits (RfcL).

Part of the RFC clamp loader complex which loads the PCNA sliding clamp onto DNA. The polypeptide is Replication factor C large subunit (Pyrobaculum neutrophilum (strain DSM 2338 / JCM 9278 / NBRC 100436 / V24Sta) (Thermoproteus neutrophilus)).